The following is a 272-amino-acid chain: UPF0759 protein YecE (272 aa).

It belongs to the UPF0759 family.

This is UPF0759 protein YecE (yecE) from Escherichia coli (strain K12).